A 251-amino-acid polypeptide reads, in one-letter code: Small ribosomal subunit protein uS2 (251 aa).

The protein belongs to the universal ribosomal protein uS2 family.

In Azoarcus sp. (strain BH72), this protein is Small ribosomal subunit protein uS2.